The following is a 232-amino-acid chain: Orotate phosphoribosyltransferase (232 aa).

5-phospho-alpha-D-ribose 1-diphosphate-binding positions include arginine 107, lysine 108, lysine 111, histidine 113, and 133–141 (EDLTTAGGS). Residue threonine 137 participates in orotate binding.

It belongs to the purine/pyrimidine phosphoribosyltransferase family. PyrE subfamily. As to quaternary structure, homodimer. The cofactor is Mg(2+).

The enzyme catalyses orotidine 5'-phosphate + diphosphate = orotate + 5-phospho-alpha-D-ribose 1-diphosphate. The protein operates within pyrimidine metabolism; UMP biosynthesis via de novo pathway; UMP from orotate: step 1/2. Functionally, catalyzes the transfer of a ribosyl phosphate group from 5-phosphoribose 1-diphosphate to orotate, leading to the formation of orotidine monophosphate (OMP). This is Orotate phosphoribosyltransferase from Agrobacterium fabrum (strain C58 / ATCC 33970) (Agrobacterium tumefaciens (strain C58)).